Consider the following 319-residue polypeptide: Small ribosomal subunit protein mS35 (319 aa).

The N-terminal 30 residues, 1 to 30 (MKVPLGLWKVSRGNLWSTQKRVLTMSRCLN), are a transit peptide targeting the mitochondrion.

It belongs to the mitochondrion-specific ribosomal protein mS35 family. As to quaternary structure, component of the mitochondrial small ribosomal subunit (mt-SSU). Mature yeast 74S mitochondrial ribosomes consist of a small (37S) and a large (54S) subunit. The 37S small subunit contains a 15S ribosomal RNA (15S mt-rRNA) and 34 different proteins. The 54S large subunit contains a 21S rRNA (21S mt-rRNA) and 46 different proteins.

It is found in the mitochondrion. In terms of biological role, component of the mitochondrial ribosome (mitoribosome), a dedicated translation machinery responsible for the synthesis of mitochondrial genome-encoded proteins, including at least some of the essential transmembrane subunits of the mitochondrial respiratory chain. The mitoribosomes are attached to the mitochondrial inner membrane and translation products are cotranslationally integrated into the membrane. The chain is Small ribosomal subunit protein mS35 (RSM24) from Saccharomyces cerevisiae (strain ATCC 204508 / S288c) (Baker's yeast).